The primary structure comprises 224 residues: Octanoyltransferase (224 aa).

A BPL/LPL catalytic domain is found at 45-223; sequence PSNKQAVWML…SLNKRFGLLW (179 aa). Residues 87–94, 154–156, and 167–169 each bind substrate; these read RGGDVTHH, SIG, and GIA. C185 (acyl-thioester intermediate) is an active-site residue.

It belongs to the LipB family.

It is found in the cytoplasm. It catalyses the reaction octanoyl-[ACP] + L-lysyl-[protein] = N(6)-octanoyl-L-lysyl-[protein] + holo-[ACP] + H(+). It functions in the pathway protein modification; protein lipoylation via endogenous pathway; protein N(6)-(lipoyl)lysine from octanoyl-[acyl-carrier-protein]: step 1/2. Its function is as follows. Catalyzes the transfer of endogenously produced octanoic acid from octanoyl-acyl-carrier-protein onto the lipoyl domains of lipoate-dependent enzymes. Lipoyl-ACP can also act as a substrate although octanoyl-ACP is likely to be the physiological substrate. This is Octanoyltransferase from Prochlorococcus marinus (strain SARG / CCMP1375 / SS120).